The chain runs to 141 residues: Protein stum homolog (141 aa).

Ser26 carries the post-translational modification Phosphoserine. 2 helical membrane-spanning segments follow: residues 51–71 (FPVAVICLFLNTFVPGLGTFV) and 87–107 (RHVCCVFWLNIAAALIQILTA).

The protein belongs to the SPEC3 family. Stum subfamily.

It is found in the membrane. This is Protein stum homolog from Homo sapiens (Human).